The following is a 71-amino-acid chain: Biotinylated protein TB7.3 (71 aa).

Residues 2–71 (AEDVRAEIVA…QAGDLIAVIS (70 aa)) enclose the Biotinyl-binding domain. Lysine 37 is subject to N6-biotinyllysine.

The sequence is that of Biotinylated protein TB7.3 from Mycobacterium bovis (strain ATCC BAA-935 / AF2122/97).